Here is a 196-residue protein sequence, read N- to C-terminus: RFKKIRRLGALPGLTSKRPRSGNDLKNQLRSVKRSQYRIRLEEKQKLRFHYGLTERQLLKYVHIAGKVKGSTGQVLLQLLEMRLDNILFRLGMASTIPGARQLVNHRHILVNGRIVDIPSYRCKPQDIITTKDKQKSKALIQNYIASSTQPQEELPNHLTIDPFQYKGLVNQIRDSKWIGLKINELLVVEYYSRQT.

Residues 82–143 form the S4 RNA-binding domain; sequence MRLDNILFRL…KQKSKALIQN (62 aa).

It belongs to the universal ribosomal protein uS4 family. In terms of assembly, part of the 30S ribosomal subunit. Contacts protein S5. The interaction surface between S4 and S5 is involved in control of translational fidelity.

It is found in the plastid. It localises to the chloroplast. One of the primary rRNA binding proteins, it binds directly to 16S rRNA where it nucleates assembly of the body of the 30S subunit. In terms of biological role, with S5 and S12 plays an important role in translational accuracy. The polypeptide is Small ribosomal subunit protein uS4c (rps4) (Patersonia sp. (strain Lejeune 1997)).